Consider the following 185-residue polypeptide: Ion-translocating oxidoreductase complex subunit B (185 aa).

Positions 1–26 (MNHILLIILIFAALALIFGLLLGFAA) are hydrophobic. Positions 32–90 (ESDPIVDQLDALLPQTQCGQCGYPGCRPYAEAIANGDSINKCVPGGAQTIQNIADLMGV) constitute a 4Fe-4S domain. 12 residues coordinate [4Fe-4S] cluster: Cys-49, Cys-52, Cys-57, Cys-73, Cys-115, Cys-118, Cys-121, Cys-125, Cys-145, Cys-148, Cys-151, and Cys-155. 2 4Fe-4S ferredoxin-type domains span residues 106–135 (RVAF…GAPK) and 136–165 (LMHT…MIEL).

Belongs to the 4Fe4S bacterial-type ferredoxin family. RnfB subfamily. As to quaternary structure, the complex is composed of six subunits: RnfA, RnfB, RnfC, RnfD, RnfE and RnfG. It depends on [4Fe-4S] cluster as a cofactor.

It localises to the cell inner membrane. Part of a membrane-bound complex that couples electron transfer with translocation of ions across the membrane. The protein is Ion-translocating oxidoreductase complex subunit B of Tolumonas auensis (strain DSM 9187 / NBRC 110442 / TA 4).